A 502-amino-acid chain; its full sequence is MAISTPMLVTFCVYIFGMILIGFIAWRSTKNFDDYILGGRSLGPFVTALSAGASDMSGWLLMGLPGAVFLSGISESWIAIGLTLGAWINWKLVAGRLRVHTEYNNNALTLPDYFTGRFEDKSRILRIISALVILLFFTIYCASGIVAGARLFESTFGMSYETALWAGAAATILYTFIGGFLAVSWTDTVQASLMIFALILTPVIVIISVGGFGDSLEVIKQKSIENVDMLKGLNFVAIISLMGWGLGYFGQPHILARFMAADSHHSIVHARRISMTWMILCLAGAVAVGFFGIAYFNDHPALAGAVNQNAERVFIELAQILFNPWIAGILLSAILAAVMSTLSCQLLVCSSAITEDLYKAFLRKHASQKELVWVGRVMVLVVALVAIALAANPENRVLGLVSYAWAGFGAAFGPVVLFSVMWSRMTRNGALAGMIIGALTVIVWKQFGWLGLYEIIPGFIFGSIGIVVFSLLGKAPSAAMQKRFAEADAHYHSAPPSRLQES.

Topologically, residues Met-1–Thr-5 are periplasmic. A helical transmembrane segment spans residues Pro-6–Trp-26. The Cytoplasmic portion of the chain corresponds to Arg-27–Ser-41. Hydrophilic regions lie at residues Arg-27–Gly-66 and Ile-88–Ile-124. A helical transmembrane segment spans residues Leu-42–Met-62. Over Gly-63–Ala-67 the chain is Periplasmic. A helical membrane pass occupies residues Val-68–Ile-88. Over Asn-89–Arg-126 the chain is Cytoplasmic. A helical membrane pass occupies residues Ile-127–Ala-147. The Periplasmic segment spans residues Gly-148–Thr-162. The interval Leu-151–Thr-162 is hydrophilic. Residues Ala-163–Val-183 form a helical membrane-spanning segment. Residues Ser-184–Ser-192 are Cytoplasmic-facing. Residues Trp-185–Val-189 form a hydrophilic region. The helical transmembrane segment at Leu-193–Gly-213 threads the bilayer. 3 hydrophilic regions span residues Asp-214 to Lys-231, Phe-249 to Ser-274, and Phe-296 to Gln-319. The Periplasmic segment spans residues Asp-214 to Asn-234. The helical transmembrane segment at Phe-235–Leu-255 threads the bilayer. Residues Ala-256–Met-275 are Cytoplasmic-facing. Residues Thr-276–Phe-296 form a helical membrane-spanning segment. Topologically, residues Asn-297–Gln-319 are periplasmic. A helical membrane pass occupies residues Ile-320–Ser-340. At Thr-341 to Glu-370 the chain is on the cytoplasmic side. The tract at residues Thr-341–Glu-370 is hydrophilic. Residues Leu-371 to Ala-391 traverse the membrane as a helical segment. Residues Asn-392 to Val-397 lie on the Periplasmic side of the membrane. The tract at residues Asn-392–Val-397 is hydrophilic. Residues Leu-398–Phe-418 traverse the membrane as a helical segment. Over Ser-419–Arg-427 the chain is Cytoplasmic. Hydrophilic stretches follow at residues Arg-424–Ala-430 and Gln-446–Gly-448. The next 2 membrane-spanning stretches (helical) occupy residues Asn-428–Gly-448 and Trp-449–Phe-469. Residues Ser-470 to Ser-502 are Cytoplasmic-facing. A hydrophilic region spans residues Pro-476–Ser-502.

It belongs to the sodium:solute symporter (SSF) (TC 2.A.21) family. In terms of assembly, has been isolated from inner membrane preparations as a homodimer.

The protein localises to the cell inner membrane. The catalysed reaction is L-proline(in) + Na(+)(in) = L-proline(out) + Na(+)(out). Its activity is regulated as follows. Activity is stimulated by phosphatidylethanolamine and phosphatidylglycerol, but not by phosphatidylcholine and cardiolipin. Proline uptake is inhibited by the sulfhydryl reagent N-ethylmaleimide (NEM). Proline, in the presence of Na(+) or Li(+), protects the carrier functions from NEM-inactivation. Its function is as follows. Catalyzes the sodium-dependent uptake of extracellular L-proline. This protein is also capable of using lithium as the transport cation. Also catalyzes the uptake of propionate. In Escherichia coli (strain K12), this protein is Sodium/proline symporter (putP).